A 643-amino-acid polypeptide reads, in one-letter code: Phosphomethylpyrimidine synthase (643 aa).

Residues asparagine 221, methionine 250, tyrosine 279, histidine 315, 335 to 337 (SRG), 376 to 379 (DGLR), and glutamate 415 contribute to the substrate site. Residue histidine 419 coordinates Zn(2+). Tyrosine 442 is a binding site for substrate. Residue histidine 483 coordinates Zn(2+). [4Fe-4S] cluster contacts are provided by cysteine 563, cysteine 566, and cysteine 571.

The protein belongs to the ThiC family. In terms of assembly, homodimer. Requires [4Fe-4S] cluster as cofactor.

The enzyme catalyses 5-amino-1-(5-phospho-beta-D-ribosyl)imidazole + S-adenosyl-L-methionine = 4-amino-2-methyl-5-(phosphooxymethyl)pyrimidine + CO + 5'-deoxyadenosine + formate + L-methionine + 3 H(+). Its pathway is cofactor biosynthesis; thiamine diphosphate biosynthesis. Catalyzes the synthesis of the hydroxymethylpyrimidine phosphate (HMP-P) moiety of thiamine from aminoimidazole ribotide (AIR) in a radical S-adenosyl-L-methionine (SAM)-dependent reaction. In Nitrobacter hamburgensis (strain DSM 10229 / NCIMB 13809 / X14), this protein is Phosphomethylpyrimidine synthase.